Here is a 269-residue protein sequence, read N- to C-terminus: Polyhedrin (269 aa).

Its function is as follows. Major component of the virus occlusion bodies, which are large proteinaceous structures (polyhedra), that protect the virus from the outside environment for extended periods until they are ingested by insect larvae. This chain is Polyhedrin, found in Euxoa scandens cypovirus (EsCPV).